We begin with the raw amino-acid sequence, 255 residues long: Imidazole glycerol phosphate synthase subunit HisF (255 aa).

Active-site residues include Asp11 and Asp130.

Belongs to the HisA/HisF family. In terms of assembly, heterodimer of HisH and HisF.

Its subcellular location is the cytoplasm. The catalysed reaction is 5-[(5-phospho-1-deoxy-D-ribulos-1-ylimino)methylamino]-1-(5-phospho-beta-D-ribosyl)imidazole-4-carboxamide + L-glutamine = D-erythro-1-(imidazol-4-yl)glycerol 3-phosphate + 5-amino-1-(5-phospho-beta-D-ribosyl)imidazole-4-carboxamide + L-glutamate + H(+). Its pathway is amino-acid biosynthesis; L-histidine biosynthesis; L-histidine from 5-phospho-alpha-D-ribose 1-diphosphate: step 5/9. Its function is as follows. IGPS catalyzes the conversion of PRFAR and glutamine to IGP, AICAR and glutamate. The HisF subunit catalyzes the cyclization activity that produces IGP and AICAR from PRFAR using the ammonia provided by the HisH subunit. In Maricaulis maris (strain MCS10) (Caulobacter maris), this protein is Imidazole glycerol phosphate synthase subunit HisF.